The following is a 223-amino-acid chain: Sigma non-opioid intracellular receptor 1 (223 aa).

Residues 1-9 (MQWALGRRW) are Lumenal-facing. The tract at residues 2-8 (QWALGRR) is targeting to endoplasmic reticulum-associated lipid droplets. The helical transmembrane segment at 10–30 (VWAALLLAAAAVLTQVVWLWL) threads the bilayer. Residues 31-223 (GTQSFVFQHE…FTTYLFGQDS (193 aa)) are Cytoplasmic-facing. Positions 99-106 (SLSEYVLL) are important for ligand-binding. The interval 177–223 (VIPSTLAFALADTIFSTQDFLTLFYTLRAYARGLRLEFTTYLFGQDS) is C-terminal hydrophobic region.

This sequence belongs to the ERG2 family. In terms of assembly, homotrimer. Forms a ternary complex with ANK2 and ITPR3. The complex is disrupted by agonists. Interacts with KCNA4. Interacts with KCNA2; cocaine consumption leads to increased interaction. Interacts with RNF112 in an oxidative stress-regulated manner.

Its subcellular location is the nucleus inner membrane. It is found in the nucleus outer membrane. The protein resides in the nucleus envelope. It localises to the cytoplasmic vesicle. The protein localises to the endoplasmic reticulum membrane. Its subcellular location is the membrane. It is found in the lipid droplet. The protein resides in the cell junction. It localises to the cell membrane. The protein localises to the cell projection. Its subcellular location is the growth cone. It is found in the postsynaptic density membrane. Functions in lipid transport from the endoplasmic reticulum and is involved in a wide array of cellular functions probably through regulation of the biogenesis of lipid microdomains at the plasma membrane. Involved in the regulation of different receptors it plays a role in BDNF signaling and EGF signaling. Also regulates ion channels like the potassium channel and could modulate neurotransmitter release. Plays a role in calcium signaling through modulation together with ANK2 of the ITP3R-dependent calcium efflux at the endoplasmic reticulum. Plays a role in several other cell functions including proliferation, survival and death. Originally identified for its ability to bind various psychoactive drugs it is involved in learning processes, memory and mood alteration. Necessary for proper mitochondrial axonal transport in motor neurons, in particular the retrograde movement of mitochondria. Plays a role in protecting cells against oxidative stress-induced cell death via its interaction with RNF112. This chain is Sigma non-opioid intracellular receptor 1 (SIGMAR1), found in Mustela erminea (Ermine).